Reading from the N-terminus, the 494-residue chain is MIKFALALTLCLAGASLSLAQHNPQWWGNRNTIVHLFEWKWSDIAEECETFLAPRGFAGVQVSPVNENIISAGRPWWERYQPISYKLTTRSGNEEEFADMVRRCNDVGIRIYVDVLLNHMSGDFDGVAVGTAGTEAEPSKKSFPGVPYTAQDFHPSCEITDWNNRFQVQECELVGLKDLNQHSDYVRSKLIEFLDHLIELGVAGFRVDAAKHMAAEDLEYIYGSLSNLNIEHGFPHNARPFIFQEVIDHGHETVSREEYNQLGAVTEFRFSEEIGNAFRGNNALKWLQSWGTGWGFLSSEQAFTFVDNHDNQRDQGSVLNYKSPRQYKMATAFHLANPYGIIRVMSSFAFDDQDTPPPQDAQENIISPEFDEDGACVNGWICEHRWRQIYAMVGFKNAVRDTELSGWWDNGDNQISFCRGNKGFLAVNNNQYDLSQELNTCLPAGEYCDVISGSLIDGACTGKSVTVNEHGYGYIHIGSDDFDGVLALHVNAKV.

The signal sequence occupies residues 1 to 20 (MIKFALALTLCLAGASLSLA). Gln21 carries the post-translational modification Pyrrolidone carboxylic acid. An intrachain disulfide couples Cys48 to Cys104. Positions 118, 169, and 178 each coordinate Ca(2+). An intrachain disulfide couples Cys157 to Cys171. Residue Arg206 coordinates chloride. The active-site Nucleophile is Asp208. His212 provides a ligand contact to Ca(2+). Glu245 functions as the Proton donor in the catalytic mechanism. Asn308 and Arg343 together coordinate chloride. Intrachain disulfides connect Cys376–Cys382, Cys418–Cys441, and Cys448–Cys460.

This sequence belongs to the glycosyl hydrolase 13 family. Monomer. Ca(2+) is required as a cofactor. The cofactor is chloride.

It localises to the secreted. It carries out the reaction Endohydrolysis of (1-&gt;4)-alpha-D-glucosidic linkages in polysaccharides containing three or more (1-&gt;4)-alpha-linked D-glucose units.. This chain is Alpha-amylase-related protein (Amyrel), found in Drosophila bocqueti (Fruit fly).